The chain runs to 659 residues: MAAAVLNPGFFLLILLLSFSISPSLQYVSESEPLVRFKNSVKITKGDLNSWREGTDPCSGKWFGIYCQKGLTVSGIHVTRLGLSGTITVDDLKDLPNLKTIRLDNNLLSGPLPHFFKLRGLKSLMLSNNSFSGEIRDDFFKDMSKLKRLFLDHNKFEGSIPSSITQLPQLEELHMQSNNLTGEIPPEFGSMKNLKVLDLSTNSLDGIVPQSIADKKNLAVNLTENEYLCGPVVDVGCENIELNDPQEGQPPSKPSSSVPETSNKAAINAIMVSISLLLLFFIIVGVIKRRNKKKNPDFRMLANNRENDVVEVRISESSSTTAKRSTDSSRKRGGHSDDGSTKKGVSNIGKGGNGGGGGALGGGMGDIIMVNTDKGSFGLPDLMKAAAEVLGNGSLGSAYKAVMTTGLSVVVKRIRDMNQLAREPFDVEMRRFGKLRHPNILTPLAYHYRREEKLVVSEYMPKSSLLYVLHGDRGIYHSELTWATRLKIIQGVAHGMKFLHEEFASYDLPHGNLKSSNVLLSETYEPLISDYAFLPLLQPSNASQALFAFKTPEFAQTQQVSHKSDVYCLGIIILEILTGKFPSQYLNNGKGGTDIVQWVQSSVAEQKEEELIDPEIVNNTESMRQMVELLRVGAACIASNPDERLDMREAVRRIEQVKT.

The signal sequence occupies residues 1–26; the sequence is MAAAVLNPGFFLLILLLSFSISPSLQ. Residues 27 to 266 lie on the Extracellular side of the membrane; the sequence is YVSESEPLVR…SVPETSNKAA (240 aa). Cysteine 58 and cysteine 67 are disulfide-bonded. LRR repeat units follow at residues 95 to 118, 120 to 142, 143 to 167, 168 to 190, and 192 to 214; these read LPNL…FFKL, GLKS…FFKD, MSKL…ITQL, PQLE…EFGS, and KNLK…SIAD. Asparagine 128 carries an N-linked (GlcNAc...) asparagine glycan. Asparagine 179 carries an N-linked (GlcNAc...) asparagine glycan. A glycan (N-linked (GlcNAc...) asparagine) is linked at asparagine 221. Residues 226–242 form an LURE peptides binding region; it reads EYLCGPVVDVGCENIEL. Cysteine 229 and cysteine 237 are oxidised to a cystine. Positions 241–260 are disordered; sequence ELNDPQEGQPPSKPSSSVPE. A helical membrane pass occupies residues 267 to 287; the sequence is INAIMVSISLLLLFFIIVGVI. Topologically, residues 288 to 659 are cytoplasmic; the sequence is KRRNKKKNPD…AVRRIEQVKT (372 aa). Residues 312-354 are disordered; that stretch reads VRISESSSTTAKRSTDSSRKRGGHSDDGSTKKGVSNIGKGGNG. Residues 324–341 are compositionally biased toward basic and acidic residues; it reads RSTDSSRKRGGHSDDGST. Positions 384 to 659 constitute a Protein kinase domain; that stretch reads KAAAEVLGNG…AVRRIEQVKT (276 aa). Residues 390 to 398 and lysine 412 contribute to the ATP site; that span reads LGNGSLGSA. Serine 464 is modified (phosphoserine). Threonine 484 and threonine 557 each carry phosphothreonine. Phosphoserine is present on serine 561.

It belongs to the protein kinase superfamily. Ser/Thr protein kinase family. As to quaternary structure, interacts with ROPGEF8, ROPGEF9, ROPGEF12, ROPGEF13, PRK3, LIP1 and LIP2. Binds to LURE peptides via its LRR repeats; interacts with LURE1.1, LURE1.2, LURE1.3 and LURE1.4. As to expression, expressed specifically in the pollen tube, predominantly at the tip.

The protein resides in the cell membrane. The protein localises to the cytoplasmic granule. Its function is as follows. Key receptor for sensing species-specific attractants in cooperation with other pollen receptor-like kinases. Essential for pollen tube reorientation toward attractant peptides. The polypeptide is Pollen receptor-like kinase 6 (Arabidopsis thaliana (Mouse-ear cress)).